Consider the following 431-residue polypeptide: tRNA(Ile)-lysidine synthase (431 aa).

25 to 30 (SGGPDS) provides a ligand contact to ATP.

Belongs to the tRNA(Ile)-lysidine synthase family.

Its subcellular location is the cytoplasm. It catalyses the reaction cytidine(34) in tRNA(Ile2) + L-lysine + ATP = lysidine(34) in tRNA(Ile2) + AMP + diphosphate + H(+). Ligates lysine onto the cytidine present at position 34 of the AUA codon-specific tRNA(Ile) that contains the anticodon CAU, in an ATP-dependent manner. Cytidine is converted to lysidine, thus changing the amino acid specificity of the tRNA from methionine to isoleucine. The sequence is that of tRNA(Ile)-lysidine synthase from Lactobacillus gasseri (strain ATCC 33323 / DSM 20243 / BCRC 14619 / CIP 102991 / JCM 1131 / KCTC 3163 / NCIMB 11718 / NCTC 13722 / AM63).